Here is a 174-residue protein sequence, read N- to C-terminus: Neuromedin-U (174 aa).

Positions 1 to 34 (MLRTESCRPRSPAGQVAAASPLLLLLLLLAWCAG) are cleaved as a signal peptide. A propeptide spanning residues 35–103 (ACRGAPILPQ…EQDEKDNTKR (69 aa)) is cleaved from the precursor. Methionine 139 is modified (methionine sulfoxide; partial). The residue at position 166 (asparagine 166) is an Asparagine amide. Positions 170–174 (SAGFI) are excised as a propeptide.

This sequence belongs to the NmU family. In terms of tissue distribution, expressed throughout the enteric nervous system with highest levels being found in the jejunum.

Its subcellular location is the secreted. Its function is as follows. Ligand for receptors NMUR1 and NMUR2. Stimulates muscle contractions of specific regions of the gastrointestinal tract. In humans, NmU stimulates contractions of the ileum and urinary bladder. Functionally, does not function as a ligand for either NMUR1 or NMUR2. Indirectly induces prolactin release although its potency is much lower than that of neuromedin precursor-related peptide 36. In terms of biological role, does not function as a ligand for either NMUR1 or NMUR2. Indirectly induces prolactin release from lactotroph cells in the pituitary gland, probably via the hypothalamic dopaminergic system. The polypeptide is Neuromedin-U (NMU) (Homo sapiens (Human)).